Here is a 314-residue protein sequence, read N- to C-terminus: Glutamyl-Q tRNA(Asp) synthetase (314 aa).

L-glutamate contacts are provided by residues 14–18 (RFAPS) and Glu50. The 'HIGH' region signature appears at 17–27 (PSPTGPLHVGS). 4 residues coordinate Zn(2+): Cys106, Cys108, Tyr129, and Cys133. Residues Tyr187 and Arg205 each coordinate L-glutamate. Positions 243–247 (KLSKR) match the 'KMSKS' region motif. Lys246 provides a ligand contact to ATP.

This sequence belongs to the class-I aminoacyl-tRNA synthetase family. GluQ subfamily. Requires Zn(2+) as cofactor.

Functionally, catalyzes the tRNA-independent activation of glutamate in presence of ATP and the subsequent transfer of glutamate onto a tRNA(Asp). Glutamate is transferred on the 2-amino-5-(4,5-dihydroxy-2-cyclopenten-1-yl) moiety of the queuosine in the wobble position of the QUC anticodon. The chain is Glutamyl-Q tRNA(Asp) synthetase from Geobacter sulfurreducens (strain ATCC 51573 / DSM 12127 / PCA).